The primary structure comprises 760 residues: DNA-directed RNA polymerase subunit beta' (760 aa).

Zn(2+) contacts are provided by cysteine 76, cysteine 78, cysteine 90, and cysteine 93. Mg(2+)-binding residues include aspartate 594, aspartate 596, and aspartate 598.

This sequence belongs to the RNA polymerase beta' chain family. RpoC1 subfamily. In terms of assembly, in plastids the minimal PEP RNA polymerase catalytic core is composed of four subunits: alpha, beta, beta', and beta''. When a (nuclear-encoded) sigma factor is associated with the core the holoenzyme is formed, which can initiate transcription. The cofactor is Mg(2+). Zn(2+) is required as a cofactor.

The protein localises to the plastid. It is found in the chloroplast. The catalysed reaction is RNA(n) + a ribonucleoside 5'-triphosphate = RNA(n+1) + diphosphate. DNA-dependent RNA polymerase catalyzes the transcription of DNA into RNA using the four ribonucleoside triphosphates as substrates. The polypeptide is DNA-directed RNA polymerase subunit beta' (Bigelowiella natans (Pedinomonas minutissima)).